Reading from the N-terminus, the 388-residue chain is MENVVIIDGIRTPMGRSKGGAFRQVRAEDLSAHLMKKLFKRNPAIQQHEIDDIYWGCVQQTLEQGFNIARNAALLADIPHSVPAVTVNRLCGSSMQALHDGARMIMTGEANVTLIGGVEHMGHVPMTHGVDFHPKMSLSVAKAAGVMGLTAEMLAKIHHISREMQDEFALRSHQRATQATQSGAFANEISPIYGHDADGILKRFDYDEVIRSDANLKDLAALRPVFDPVTGSVTAGSSSALSDGASAMLITSESYAKNLGLKPRARIRSMAAVGCDPSIMGYGPVPATQMALKKAGLVLGDIGVIELNEAFAAQSLACLKGLNLLDSMDDKVNLNGGAIALGHPLGCSGARITTTLLNLMERRDVQFGLATMCIGLGQGIATIIERMD.

The Acyl-thioester intermediate role is filled by C91. Active-site proton acceptor residues include H343 and C373.

It belongs to the thiolase-like superfamily. Thiolase family. As to quaternary structure, heterotetramer of two alpha chains (FadB) and two beta chains (FadA).

It localises to the cytoplasm. It carries out the reaction an acyl-CoA + acetyl-CoA = a 3-oxoacyl-CoA + CoA. The protein operates within lipid metabolism; fatty acid beta-oxidation. In terms of biological role, catalyzes the final step of fatty acid oxidation in which acetyl-CoA is released and the CoA ester of a fatty acid two carbons shorter is formed. This Photorhabdus laumondii subsp. laumondii (strain DSM 15139 / CIP 105565 / TT01) (Photorhabdus luminescens subsp. laumondii) protein is 3-ketoacyl-CoA thiolase.